Here is a 300-residue protein sequence, read N- to C-terminus: F-box/LRR-repeat protein 15 (300 aa).

Residue Met1 is modified to N-acetylmethionine. An F-box domain is found at 19 to 66; it reads LLDLPWEDVLLPHVLSRVPLRQLLWLQRVSRAFRALVQLHLARLRRFD. Positions 113-269 are interaction with SMURF1; that stretch reads NPQLRSVALA…EPSLSRLRKR (157 aa). 5 LRR repeats span residues 141 to 162, 167 to 188, 194 to 215, 220 to 241, and 246 to 267; these read RLQR…RGLA, ALEE…VYLA, GLRN…QELA, ELQH…RTLA, and ALRS…SRLR.

This sequence belongs to the FBXL15 family. Part of the SCF (SKP1-CUL1-F-box) E3 ubiquitin-protein ligase complex SCF(FBXL15) composed of CUL1, SKP1, RBX1 and FBXL15.

The protein resides in the cytoplasm. It functions in the pathway protein modification; protein ubiquitination. Its function is as follows. Substrate recognition component of a SCF (SKP1-CUL1-F-box protein) E3 ubiquitin-protein ligase complex which mediates the ubiquitination and subsequent proteasomal degradation of SMURF1, thereby acting as a positive regulator of the BMP signaling pathway. Required for dorsal/ventral pattern formation and bone mass maintenance. Also mediates ubiquitination of SMURF2 and WWP2. This chain is F-box/LRR-repeat protein 15 (FBXL15), found in Bos taurus (Bovine).